An 81-amino-acid polypeptide reads, in one-letter code: Insect-toxin Cn10 (81 aa).

A signal peptide spans 1-13 (ITACLVLIGTVCA). In terms of domain architecture, LCN-type CS-alpha/beta spans 14 to 79 (KEGYLVNKST…TYPIPGKTCR (66 aa)). Intrachain disulfides connect Cys25-Cys78, Cys29-Cys54, Cys38-Cys59, and Cys42-Cys61. Position 81 (Lys81) is a propeptide, removed by a carboxypeptidase.

Belongs to the long (4 C-C) scorpion toxin superfamily. Sodium channel inhibitor family. Beta subfamily. Expressed by the venom gland.

It localises to the secreted. Its function is as follows. Beta toxins bind voltage-independently at site-4 of sodium channels (Nav) and shift the voltage of activation toward more negative potentials thereby affecting sodium channel activation and promoting spontaneous and repetitive firing. Is toxic on insects and crustaceans, but not on mammals. The sequence is that of Insect-toxin Cn10 from Centruroides noxius (Mexican scorpion).